Here is a 522-residue protein sequence, read N- to C-terminus: uncharacterized protein (522 aa).

The segment covering 1–11 (MSSITSRVSSR) has biased composition (low complexity). Positions 1–20 (MSSITSRVSSRSSHELTEKK) are disordered. The next 12 helical transmembrane spans lie at 69–89 (VLWKIDLVMMPVMCITYMIQY), 116–136 (SMTTLFYAGYLVAQYPAAILM), 141–161 (LSYFIFCNVFLWSAMVCLMAA), 173–193 (FLAGIFEASITPAFINITAMW), 204–224 (LCWYAFNGIAQIIGSILSYGL), 236–256 (YVFIVIGLMSLGWGVVFVFIP), 303–323 (VIMITLFTGVCMITNGIGVFS), 338–358 (AVLNMPLGAIEVAAMFISGVL), 367–387 (LLIGVFMNCLTLAGCLMIWKI), 396–416 (LVGVWFTMWVPASSALLLSLI), 428–448 (VTSATVFVFYSVGNIVSPQLF), and 462–482 (AMIVSLCIIIAIAFVLTGYYI).

It belongs to the major facilitator superfamily. Allantoate permease family.

The protein localises to the endoplasmic reticulum. It is found in the membrane. This is an uncharacterized protein from Schizosaccharomyces pombe (strain 972 / ATCC 24843) (Fission yeast).